Reading from the N-terminus, the 1060-residue chain is DNA-directed RNA polymerase subunit beta (1060 aa).

The protein belongs to the RNA polymerase beta chain family. In terms of assembly, in plastids the minimal PEP RNA polymerase catalytic core is composed of four subunits: alpha, beta, beta', and beta''. When a (nuclear-encoded) sigma factor is associated with the core the holoenzyme is formed, which can initiate transcription.

Its subcellular location is the plastid. It localises to the chloroplast. The catalysed reaction is RNA(n) + a ribonucleoside 5'-triphosphate = RNA(n+1) + diphosphate. DNA-dependent RNA polymerase catalyzes the transcription of DNA into RNA using the four ribonucleoside triphosphates as substrates. The sequence is that of DNA-directed RNA polymerase subunit beta from Calycanthus floridus var. glaucus (Eastern sweetshrub).